The primary structure comprises 340 residues: UDP-N-acetylglucosamine--N-acetylmuramyl-(pentapeptide) pyrophosphoryl-undecaprenol N-acetylglucosamine transferase (340 aa).

UDP-N-acetyl-alpha-D-glucosamine contacts are provided by residues 10–12, Asn-124, Ser-179, and Gln-277; that span reads TGG.

It belongs to the glycosyltransferase 28 family. MurG subfamily.

The protein resides in the cell inner membrane. It catalyses the reaction di-trans,octa-cis-undecaprenyl diphospho-N-acetyl-alpha-D-muramoyl-L-alanyl-D-glutamyl-meso-2,6-diaminopimeloyl-D-alanyl-D-alanine + UDP-N-acetyl-alpha-D-glucosamine = di-trans,octa-cis-undecaprenyl diphospho-[N-acetyl-alpha-D-glucosaminyl-(1-&gt;4)]-N-acetyl-alpha-D-muramoyl-L-alanyl-D-glutamyl-meso-2,6-diaminopimeloyl-D-alanyl-D-alanine + UDP + H(+). It functions in the pathway cell wall biogenesis; peptidoglycan biosynthesis. Cell wall formation. Catalyzes the transfer of a GlcNAc subunit on undecaprenyl-pyrophosphoryl-MurNAc-pentapeptide (lipid intermediate I) to form undecaprenyl-pyrophosphoryl-MurNAc-(pentapeptide)GlcNAc (lipid intermediate II). The chain is UDP-N-acetylglucosamine--N-acetylmuramyl-(pentapeptide) pyrophosphoryl-undecaprenol N-acetylglucosamine transferase from Sulfurimonas denitrificans (strain ATCC 33889 / DSM 1251) (Thiomicrospira denitrificans (strain ATCC 33889 / DSM 1251)).